A 327-amino-acid polypeptide reads, in one-letter code: Serine/threonine-protein phosphatase PP1-beta catalytic subunit (327 aa).

Position 2 is an N-acetylalanine (Ala2). 4 residues coordinate Mn(2+): Asp63, His65, Asp91, and Asn123. Residue His124 is the Proton donor of the active site. Mn(2+)-binding residues include His172 and His247. Residues Gln305 to Arg327 are disordered. At Thr316 the chain carries Phosphothreonine.

The protein belongs to the PPP phosphatase family. PP-1 subfamily. As to quaternary structure, PP1 comprises a catalytic subunit, PPP1CA, PPP1CB or PPP1CC, which is folded into its native form by inhibitor 2 and glycogen synthetase kinase 3, and then complexed to one or several targeting or regulatory subunits. The targeting or regulatory subunits determine the substrate specificity of PP1. PPP1R12A, PPP1R12B and PPP1R12C mediate binding to myosin. PPP1R3A (in skeletal muscle), PPP1R3B (in liver), PPP1R3C, PPP1R3D and PPP1R3F (in brain) mediate binding to glycogen. PPP1R15A and PPP1R15B mediate binding to EIF2S1. Part of a complex containing PPP1R15B, PP1 and NCK1/2. Interacts with PPP1R7 and PPP1R12C. Interacts with PPP1R16B. Component of the PTW/PP1 phosphatase complex, composed of PPP1R10/PNUTS, TOX4, WDR82, and PPP1CA or PPP1CB or PPP1CC. Interacts with PPP1R8. Interacts with PPP1R12A and NUAK1; the interaction is direct. Interacts with TRIM28; the interaction is weak. Interacts with FOXP3. Interacts with RRP1B. Interacts with SERPINE1. Interacts with LZTR1. Component of the SHOC2-MRAS-PP1c (SMP) complex consisting of SHOC2, GTP-bound M-Ras/MRAS and the catalytic subunit of protein phosphatase 1 (either PPP1CA, PPP1CB or PPP1CC). SHOC2 and PP1c preferably bind M-Ras/MRAS, but they also bind K-Ras/KRAS, N-Ras/NRAS and H-Ras/HRAS; these interactions are GTP-dependent and both SHOC2 and PP1c are required to form a stable complex. Interacts with SHOC2 in the absence of Ras GTPases. It depends on Mn(2+) as a cofactor.

The protein localises to the cytoplasm. It is found in the nucleus. The protein resides in the nucleoplasm. It localises to the nucleolus. It carries out the reaction O-phospho-L-seryl-[protein] + H2O = L-seryl-[protein] + phosphate. The enzyme catalyses O-phospho-L-threonyl-[protein] + H2O = L-threonyl-[protein] + phosphate. It catalyses the reaction O-phospho-L-seryl-[myosin light chain] + H2O = L-seryl-[myosin light chain] + phosphate. The catalysed reaction is O-phospho-L-threonyl-[myosin light chain] + H2O = L-threonyl-[myosin light chain] + phosphate. Inhibited by the toxins okadaic acid, tautomycin and microcystin Leu-Arg. The phosphatase activity of the PPP1R15A-PP1 complex toward EIF2S1 is specifically inhibited by Salubrinal, a drug that protects cells from endoplasmic reticulum stress. Functionally, protein phosphatase that associates with over 200 regulatory proteins to form highly specific holoenzymes which dephosphorylate hundreds of biological targets. Protein phosphatase (PP1) is essential for cell division, it participates in the regulation of glycogen metabolism, muscle contractility and protein synthesis. Involved in regulation of ionic conductances and long-term synaptic plasticity. Component of the PTW/PP1 phosphatase complex, which plays a role in the control of chromatin structure and cell cycle progression during the transition from mitosis into interphase. In balance with CSNK1D and CSNK1E, determines the circadian period length, through the regulation of the speed and rhythmicity of PER1 and PER2 phosphorylation. May dephosphorylate CSNK1D and CSNK1E. Core component of the SHOC2-MRAS-PP1c (SMP) holophosphatase complex that regulates the MAPK pathway activation. The SMP complex specifically dephosphorylates the inhibitory phosphorylation at 'Ser-259' of RAF1 kinase, 'Ser-365' of BRAF kinase and 'Ser-214' of ARAF kinase, stimulating their kinase activities. The SMP complex enhances the dephosphorylation activity and substrate specificity of PP1c. This is Serine/threonine-protein phosphatase PP1-beta catalytic subunit (PPP1CB) from Bos taurus (Bovine).